Reading from the N-terminus, the 236-residue chain is Purine nucleoside phosphorylase DeoD-type 2 (236 aa).

Residue His-5 coordinates a purine D-ribonucleoside. Phosphate contacts are provided by residues Gly-21, Arg-25, Arg-44, and Arg-88–Ser-91. A purine D-ribonucleoside-binding positions include Asp-180–Glu-182 and Ser-204–Asp-205. The active-site Proton donor is Asp-205.

The protein belongs to the PNP/UDP phosphorylase family. Homohexamer; trimer of homodimers.

The enzyme catalyses a purine D-ribonucleoside + phosphate = a purine nucleobase + alpha-D-ribose 1-phosphate. It carries out the reaction a purine 2'-deoxy-D-ribonucleoside + phosphate = a purine nucleobase + 2-deoxy-alpha-D-ribose 1-phosphate. Catalyzes the reversible phosphorolytic breakdown of the N-glycosidic bond in the beta-(deoxy)ribonucleoside molecules, with the formation of the corresponding free purine bases and pentose-1-phosphate. This chain is Purine nucleoside phosphorylase DeoD-type 2, found in Vibrio cholerae serotype O1 (strain ATCC 39315 / El Tor Inaba N16961).